Here is a 300-residue protein sequence, read N- to C-terminus: Ribonuclease HIII (300 aa).

Positions 83–300 (IPIIGSDEVG…THKAQALLTK (218 aa)) constitute an RNase H type-2 domain. The a divalent metal cation site is built by D89, E90, and D194.

It belongs to the RNase HII family. RnhC subfamily. Mn(2+) serves as cofactor. Mg(2+) is required as a cofactor.

It is found in the cytoplasm. The enzyme catalyses Endonucleolytic cleavage to 5'-phosphomonoester.. Functionally, endonuclease that specifically degrades the RNA of RNA-DNA hybrids. The sequence is that of Ribonuclease HIII from Streptococcus pyogenes serotype M12 (strain MGAS2096).